Consider the following 610-residue polypeptide: UvrABC system protein C (610 aa).

In terms of domain architecture, GIY-YIG spans 16–94 (SQPGVYRMYD…IKLYQPRYNV (79 aa)). In terms of domain architecture, UVR spans 204 to 239 (QQVLTQLITRMEEASQQLHFEDAARIRDQIQAVRRV).

Belongs to the UvrC family. In terms of assembly, interacts with UvrB in an incision complex.

It localises to the cytoplasm. Functionally, the UvrABC repair system catalyzes the recognition and processing of DNA lesions. UvrC both incises the 5' and 3' sides of the lesion. The N-terminal half is responsible for the 3' incision and the C-terminal half is responsible for the 5' incision. The chain is UvrABC system protein C from Yersinia pseudotuberculosis serotype O:1b (strain IP 31758).